A 167-amino-acid polypeptide reads, in one-letter code: Leptin (167 aa).

The first 21 residues, 1–21, serve as a signal peptide directing secretion; the sequence is MHWGTLCGFLWLWPYLFYVQA. Residues Cys117 and Cys167 are joined by a disulfide bond.

This sequence belongs to the leptin family. As to quaternary structure, interacts with SIGLEC6. In terms of tissue distribution, adipose tissue is the main source of leptin. It is also produced by other peripheral tissues such as the skeletal muscle. Expressed by intercalated and striated tracts of submandibular and parotid salivary gland intralobular ducts. Detected by fundic epithelium of the gastric mucosa. Secreted into blood and gastric juice.

It is found in the secreted. Functionally, key player in the regulation of energy balance and body weight control. Once released into the circulation, has central and peripheral effects by binding LEPR, found in many tissues, which results in the activation of several major signaling pathways. In the hypothalamus, acts as an appetite-regulating factor that induces a decrease in food intake and an increase in energy consumption by inducing anorexinogenic factors and suppressing orexigenic neuropeptides, also regulates bone mass and secretion of hypothalamo-pituitary-adrenal hormones. In the periphery, increases basal metabolism, influences reproductive function, regulates pancreatic beta-cell function and insulin secretion, is pro-angiogenic for endothelial cell and affects innate and adaptive immunity. In the arcuate nucleus of the hypothalamus, activates by depolarization POMC neurons inducing FOS and SOCS3 expression to release anorexigenic peptides and inhibits by hyperpolarization NPY neurons inducing SOCS3 with a consequent reduction on release of orexigenic peptides. In addition to its known satiety inducing effect, has a modulatory role in nutrient absorption. In the intestine, reduces glucose absorption by enterocytes by activating PKC and leading to a sequential activation of p38, PI3K and ERK signaling pathways which exerts an inhibitory effect on glucose absorption. Acts as a growth factor on certain tissues, through the activation of different signaling pathways increases expression of genes involved in cell cycle regulation such as CCND1, via JAK2-STAT3 pathway, or VEGFA, via MAPK1/3 and PI3K-AKT1 pathways. May also play an apoptotic role via JAK2-STAT3 pathway and up-regulation of BIRC5 expression. Pro-angiogenic, has mitogenic activity on vascular endothelial cells and plays a role in matrix remodeling by regulating the expression of matrix metalloproteinases (MMPs) and tissue inhibitors of metalloproteinases (TIMPs). In innate immunity, modulates the activity and function of neutrophils by increasing chemotaxis and the secretion of oxygen radicals. Increases phagocytosis by macrophages and enhances secretion of pro-inflammatory mediators. Increases cytotoxic ability of NK cells. Plays a pro-inflammatory role, in synergy with IL1B, by inducing NOS2 which promotes the production of IL6, IL8 and Prostaglandin E2, through a signaling pathway that involves JAK2, PI3K, MAP2K1/MEK1 and MAPK14/p38. In adaptive immunity, promotes the switch of memory T-cells towards T helper-1 cell immune responses. Increases CD4(+)CD25(-) T-cell proliferation and reduces autophagy during TCR (T-cell receptor) stimulation, through MTOR signaling pathway activation and BCL2 up-regulation. The sequence is that of Leptin from Homo sapiens (Human).